We begin with the raw amino-acid sequence, 208 residues long: MKAIFITLEGPDGSGKTTVGTLLNQKMTEAGIDFIKTREPGGSPISEKVRNIVLGIGNEEMDPKTEVLLIAGARRQHVVETIRPALAVGKTVLCDRFMDSSLAYQGAGRDMDMEQVLQVNLYAIEDTLPDRTYYLDVPAEVGLARIAANKGREVNRLDKEDITYHEKVQAGYEKVINMFPERFMRVDATKTPEEITETILADILRQLA.

An ATP-binding site is contributed by 10–17; sequence GPDGSGKT.

This sequence belongs to the thymidylate kinase family.

It catalyses the reaction dTMP + ATP = dTDP + ADP. Its function is as follows. Phosphorylation of dTMP to form dTDP in both de novo and salvage pathways of dTTP synthesis. The protein is Thymidylate kinase of Listeria monocytogenes serotype 4a (strain HCC23).